We begin with the raw amino-acid sequence, 308 residues long: Nuclear transcription factor Y subunit A-5 (308 aa).

Residues 1 to 10 (MQVFQRKEDS) are compositionally biased toward basic and acidic residues. 2 disordered regions span residues 1 to 26 (MQVF…IQGS) and 49 to 71 (GLQL…GGGE). Over residues 11–26 (SWGNSMPTTNSNIQGS) the composition is skewed to polar residues. A Subunit association domain (SAD) motif is present at residues 181–204 (FVNAKQYHAILRRRKHRAKLEAQN). Residues 211–236 (KPYLHESRHLHALKRARGSGGRFLNT) constitute a DNA-binding region (NFYA/HAP2-type). The interval 251-273 (MANGQNFSMSPHGGGSGIGSSSI) is disordered.

The protein belongs to the NFYA/HAP2 subunit family. As to quaternary structure, heterotrimeric transcription factor composed of three components, NF-YA, NF-YB and NF-YC. NF-YB and NF-YC must interact and dimerize for NF-YA association and DNA binding. In terms of tissue distribution, expressed in the whole plant, except roots. Present in etiolated seedlings.

The protein resides in the nucleus. Its function is as follows. Stimulates the transcription of various genes by recognizing and binding to a CCAAT motif in promoters. Involved in the blue light (BL) and abscisic acid (ABA) signaling pathways. The chain is Nuclear transcription factor Y subunit A-5 (NFYA5) from Arabidopsis thaliana (Mouse-ear cress).